The sequence spans 226 residues: 2-C-methyl-D-erythritol 4-phosphate cytidylyltransferase (226 aa).

This sequence belongs to the IspD/TarI cytidylyltransferase family. IspD subfamily.

The catalysed reaction is 2-C-methyl-D-erythritol 4-phosphate + CTP + H(+) = 4-CDP-2-C-methyl-D-erythritol + diphosphate. It participates in isoprenoid biosynthesis; isopentenyl diphosphate biosynthesis via DXP pathway; isopentenyl diphosphate from 1-deoxy-D-xylulose 5-phosphate: step 2/6. Its function is as follows. Catalyzes the formation of 4-diphosphocytidyl-2-C-methyl-D-erythritol from CTP and 2-C-methyl-D-erythritol 4-phosphate (MEP). In Bacillus cytotoxicus (strain DSM 22905 / CIP 110041 / 391-98 / NVH 391-98), this protein is 2-C-methyl-D-erythritol 4-phosphate cytidylyltransferase.